The sequence spans 73 residues: Translation initiation factor IF-1 3 (73 aa).

The S1-like domain occupies 1 to 72 (MAKEELVEFG…TKGRINYRHK (72 aa)).

The protein belongs to the IF-1 family. Component of the 30S ribosomal translation pre-initiation complex which assembles on the 30S ribosome in the order IF-2 and IF-3, IF-1 and N-formylmethionyl-tRNA(fMet); mRNA recruitment can occur at any time during PIC assembly.

It is found in the cytoplasm. Functionally, one of the essential components for the initiation of protein synthesis. Stabilizes the binding of IF-2 and IF-3 on the 30S subunit to which N-formylmethionyl-tRNA(fMet) subsequently binds. Helps modulate mRNA selection, yielding the 30S pre-initiation complex (PIC). Upon addition of the 50S ribosomal subunit IF-1, IF-2 and IF-3 are released leaving the mature 70S translation initiation complex. The polypeptide is Translation initiation factor IF-1 3 (Cupriavidus metallidurans (strain ATCC 43123 / DSM 2839 / NBRC 102507 / CH34) (Ralstonia metallidurans)).